A 437-amino-acid polypeptide reads, in one-letter code: ATP-dependent RNA helicase RhlB (437 aa).

Residues 9–37 carry the Q motif motif; it reads QKFADLGLEPTVLEGLDAQGFHYCTPIQA. The region spanning 40-219 is the Helicase ATP-binding domain; the sequence is LPVVLTGQDI…FEHMNSPESV (180 aa). Residue 53–60 coordinates ATP; the sequence is AQTGTGKT. The short motif at 165–168 is the DEAD box element; that stretch reads DEAD. Residues 245–390 form the Helicase C-terminal domain; the sequence is RLLQTLIEEE…LSKYNSEALL (146 aa). The disordered stretch occupies residues 395–437; the sequence is APLRLQRTPRQGGNRRPNGNRQGQGQSRPRNNNRRHPQSQKQQ. Over residues 400-424 the composition is skewed to low complexity; sequence QRTPRQGGNRRPNGNRQGQGQSRPR. A compositionally biased stretch (basic residues) spans 425 to 437; sequence NNNRRHPQSQKQQ.

Belongs to the DEAD box helicase family. RhlB subfamily. As to quaternary structure, component of the RNA degradosome, which is a multiprotein complex involved in RNA processing and mRNA degradation.

It is found in the cytoplasm. It carries out the reaction ATP + H2O = ADP + phosphate + H(+). In terms of biological role, DEAD-box RNA helicase involved in RNA degradation. Has RNA-dependent ATPase activity and unwinds double-stranded RNA. The protein is ATP-dependent RNA helicase RhlB of Photobacterium profundum (strain SS9).